A 98-amino-acid chain; its full sequence is NADH-ubiquinone oxidoreductase chain 4L (98 aa).

3 consecutive transmembrane segments (helical) span residues 1–21 (MTPT…GLTF), 26–46 (LLSA…SMAL), and 59–79 (APML…ALLV).

This sequence belongs to the complex I subunit 4L family. As to quaternary structure, core subunit of respiratory chain NADH dehydrogenase (Complex I) which is composed of 45 different subunits.

The protein resides in the mitochondrion inner membrane. It carries out the reaction a ubiquinone + NADH + 5 H(+)(in) = a ubiquinol + NAD(+) + 4 H(+)(out). Functionally, core subunit of the mitochondrial membrane respiratory chain NADH dehydrogenase (Complex I) which catalyzes electron transfer from NADH through the respiratory chain, using ubiquinone as an electron acceptor. Part of the enzyme membrane arm which is embedded in the lipid bilayer and involved in proton translocation. This is NADH-ubiquinone oxidoreductase chain 4L (mt-nd4l) from Danio rerio (Zebrafish).